Reading from the N-terminus, the 371-residue chain is Peptide chain release factor 2 (371 aa).

N5-methylglutamine is present on Gln-250.

Belongs to the prokaryotic/mitochondrial release factor family. Post-translationally, methylated by PrmC. Methylation increases the termination efficiency of RF2.

It localises to the cytoplasm. Functionally, peptide chain release factor 2 directs the termination of translation in response to the peptide chain termination codons UGA and UAA. This is Peptide chain release factor 2 from Paramagnetospirillum magneticum (strain ATCC 700264 / AMB-1) (Magnetospirillum magneticum).